The chain runs to 171 residues: Large ribosomal subunit protein bL9 (171 aa).

The protein belongs to the bacterial ribosomal protein bL9 family.

Binds to the 23S rRNA. The polypeptide is Large ribosomal subunit protein bL9 (Rickettsia typhi (strain ATCC VR-144 / Wilmington)).